The primary structure comprises 231 residues: 7-cyano-7-deazaguanine synthase (231 aa).

8 to 18 (FSGGQDSTTCL) provides a ligand contact to ATP. Residues C188, C197, C200, and C203 each coordinate Zn(2+).

This sequence belongs to the QueC family. Zn(2+) serves as cofactor.

It carries out the reaction 7-carboxy-7-deazaguanine + NH4(+) + ATP = 7-cyano-7-deazaguanine + ADP + phosphate + H2O + H(+). It functions in the pathway purine metabolism; 7-cyano-7-deazaguanine biosynthesis. In terms of biological role, catalyzes the ATP-dependent conversion of 7-carboxy-7-deazaguanine (CDG) to 7-cyano-7-deazaguanine (preQ(0)). The chain is 7-cyano-7-deazaguanine synthase from Enterobacter sp. (strain 638).